The primary structure comprises 544 residues: Inward rectifier potassium channel irk-1 (544 aa).

The Cytoplasmic segment spans residues 1–109 (MTLSVPDCAE…IFTTMIDVKW (109 aa)). A helical transmembrane segment spans residues 110 to 134 (RWMLMLFASAFVLSWSIFGTTYYLI). Residues 135-158 (ALVHGDLSLPTPVNHTACVMNLDS) are Extracellular-facing. An intramembrane region (helical; Pore-forming) is located at residues 159–170 (VYSSFLFAVETH). The pore-forming intramembrane region spans 171–177 (HTIGYGH). The Selectivity filter signature appears at 172–177 (TIGYGH). Residues 178-186 (RYITTECYL) lie on the Extracellular side of the membrane. A helical membrane pass occupies residues 187 to 208 (AGAIVCLQAICALLLQSFMVGI). Topologically, residues 209–544 (VFAKMARPKK…PIHIEIVSET (336 aa)) are cytoplasmic. Disordered regions lie at residues 411–448 (HKLE…NSPV) and 512–533 (LSDL…SPPV). Polar residues predominate over residues 438 to 448 (NHFQSSSNSPV).

It belongs to the inward rectifier-type potassium channel (TC 1.A.2.1) family. As to expression, expressed in neurons in the head and tail with no expression detected in non-neuronal cells in these regions. Also detected in the egg-laying system of adult hermaphordites with strong expression in the HSN motor neurons and weak expression in vulval muscles.

Its subcellular location is the membrane. It is found in the perikaryon. The protein localises to the cell projection. Functionally, inward rectifier potassium channels are characterized by a greater tendency to allow potassium to flow into the cell rather than out of it. Required for modulation of the activity of the hermaphrodite-specific neurons (HSNs) by the G-protein coupled neuropeptide receptor egl-6 which in turn controls egg-laying behavior. The protein is Inward rectifier potassium channel irk-1 (irk-1) of Caenorhabditis elegans.